A 105-amino-acid polypeptide reads, in one-letter code: UPF0235 protein RrIowa_1526 (105 aa).

The protein belongs to the UPF0235 family.

This chain is UPF0235 protein RrIowa_1526, found in Rickettsia rickettsii (strain Iowa).